Consider the following 345-residue polypeptide: Centromere protein U (345 aa).

2 stretches are compositionally biased toward basic residues: residues 1–10 (MSSKKRTKRN) and 19–29 (HKGRSHPRRKF). Disordered stretches follow at residues 1–37 (MSSK…EPDV) and 64–153 (AVDA…SSVQ). The segment covering 88-106 (NAERSEKMLLETPEGDVHE) has biased composition (basic and acidic residues). The segment covering 142 to 152 (SDSSVNSPSSV) has biased composition (low complexity). A coiled-coil region spans residues 201–294 (CSAFEDQVTD…QDYLDYREEN (94 aa)). Residues 222 to 239 (KKKNAKVVADIKKKRQRL) carry the Nuclear localization signal motif.

Belongs to the CENP-U/AME1 family. Interacts with CENPH-CENPI complex at the kinetochore.

It localises to the nucleus. The protein localises to the chromosome. It is found in the centromere. Functionally, probable component of a centromeric complex involved in assembly of kinetochore proteins, mitotic progression and chromosome segregation. Required for maintenance of sister chromatid adhesion during mitotic checkpoint activation. The polypeptide is Centromere protein U (CENPU) (Gallus gallus (Chicken)).